The following is a 148-amino-acid chain: Iron/alpha-ketoglutarate-dependent dioxygenase ausU (148 aa).

2 residues coordinate Fe cation: His45 and Asp47.

Belongs to the PhyH family. Homodimer. Fe cation serves as cofactor.

It functions in the pathway secondary metabolite biosynthesis; terpenoid biosynthesis. Functionally, iron/alpha-ketoglutarate-dependent dioxygenase; part of the gene cluster B that mediates the biosynthesis of austinol and dehydroaustinol, two fungal meroterpenoids. The first step of the pathway is the synthesis of 3,5-dimethylorsellinic acid by the polyketide synthase ausA. 3,5-dimethylorsellinic acid is then prenylated by the polyprenyl transferase ausN. Further epoxidation by the FAD-dependent monooxygenase ausM and cyclization by the probable terpene cyclase ausL lead to the formation of protoaustinoid A. Protoaustinoid A is then oxidized to spiro-lactone preaustinoid A3 by the combined action of the FAD-binding monooxygenases ausB and ausC, and the dioxygenase ausE. Acid-catalyzed keto-rearrangement and ring contraction of the tetraketide portion of preaustinoid A3 by ausJ lead to the formation of preaustinoid A4. The aldo-keto reductase ausK, with the help of ausH, is involved in the next step by transforming preaustinoid A4 into isoaustinone which is in turn hydroxylated by the P450 monooxygenase ausI to form austinolide. Finally, the cytochrome P450 monooxygenase ausG modifies austinolide to austinol. Austinol can be further modified to dehydroaustinol which forms a diffusible complex with diorcinol that initiates conidiation. Due to genetic rearrangements of the clusters and the subsequent loss of some enzymes, the end products of the Emericella nidulans austinoid biosynthesis clusters are austinol and dehydroaustinol, even if additional enzymes, such as the O-acetyltransferase ausQ and the cytochrome P450 monooxygenase ausR are still functional. This is Iron/alpha-ketoglutarate-dependent dioxygenase ausU from Emericella nidulans (strain FGSC A4 / ATCC 38163 / CBS 112.46 / NRRL 194 / M139) (Aspergillus nidulans).